The following is a 61-amino-acid chain: UPF0434 protein PST_2635 (61 aa).

The protein belongs to the UPF0434 family.

In Stutzerimonas stutzeri (strain A1501) (Pseudomonas stutzeri), this protein is UPF0434 protein PST_2635.